A 447-amino-acid polypeptide reads, in one-letter code: N-succinylarginine dihydrolase (447 aa).

Residues 19-28 (AGLSFGNEAS), N110, and 137-138 (HR) contribute to the substrate site. E174 is an active-site residue. Residue R214 participates in substrate binding. The active site involves H250. Substrate-binding residues include D252 and N365. The Nucleophile role is filled by C371.

It belongs to the succinylarginine dihydrolase family. Homodimer.

The enzyme catalyses N(2)-succinyl-L-arginine + 2 H2O + 2 H(+) = N(2)-succinyl-L-ornithine + 2 NH4(+) + CO2. It functions in the pathway amino-acid degradation; L-arginine degradation via AST pathway; L-glutamate and succinate from L-arginine: step 2/5. Catalyzes the hydrolysis of N(2)-succinylarginine into N(2)-succinylornithine, ammonia and CO(2). In Acinetobacter baumannii (strain ACICU), this protein is N-succinylarginine dihydrolase.